Consider the following 752-residue polypeptide: Mitochondrial Rho GTPase 1 (752 aa).

At methionine 1–arginine 671 the chain is on the cytoplasmic side. The 169-residue stretch at arginine 2–tyrosine 170 folds into the Miro 1 domain. GTP is bound by residues glycine 11–serine 18, aspartate 57–serine 61, and asparagine 115–aspartate 118. EF-hand domains follow at residues alanine 186–threonine 221 and asparagine 333–asparagine 368. Aspartate 199, aspartate 201, aspartate 203, glutamate 210, aspartate 346, aspartate 348, aspartate 350, and glutamate 357 together coordinate Ca(2+). Residues serine 426–isoleucine 460 are disordered. Pro residues predominate over residues alanine 434–serine 446. The Miro 2 domain maps to arginine 481–aspartate 651. GTP is bound by residues glycine 490 to threonine 497, glutamate 526 to alanine 530, and threonine 595 to aspartate 598. The helical; Anchor for type IV membrane protein transmembrane segment at tryptophan 672–cysteine 692 threads the bilayer. The Mitochondrial intermembrane segment spans residues alanine 693 to leucine 752.

It belongs to the mitochondrial Rho GTPase family.

The protein resides in the mitochondrion outer membrane. Its function is as follows. Mitochondrial GTPase involved in mitochondrial trafficking. Probably involved in control of anterograde transport of mitochondria and their subcellular distribution. The protein is Mitochondrial Rho GTPase 1 (GEM1) of Mycosarcoma maydis (Corn smut fungus).